Here is a 726-residue protein sequence, read N- to C-terminus: Catalase-peroxidase (726 aa).

The segment at residues 96-224 is a cross-link (tryptophyl-tyrosyl-methioninium (Trp-Tyr) (with M-250)); that stretch reads WHSAGTYRIA…LAAVMMGLIY (129 aa). The active-site Proton acceptor is H97. Residues 224 to 250 constitute a cross-link (tryptophyl-tyrosyl-methioninium (Tyr-Met) (with W-96)); that stretch reads YVNPEGVDGKPDPLKTAHDMRVTFARM. H265 contacts heme b.

Belongs to the peroxidase family. Peroxidase/catalase subfamily. Homodimer or homotetramer. It depends on heme b as a cofactor. Post-translationally, formation of the three residue Trp-Tyr-Met cross-link is important for the catalase, but not the peroxidase activity of the enzyme.

The catalysed reaction is H2O2 + AH2 = A + 2 H2O. It catalyses the reaction 2 H2O2 = O2 + 2 H2O. In terms of biological role, bifunctional enzyme with both catalase and broad-spectrum peroxidase activity. The chain is Catalase-peroxidase from Vibrio campbellii (strain ATCC BAA-1116).